A 160-amino-acid chain; its full sequence is Cytochrome b6-f complex subunit 4 (160 aa).

3 helical membrane-spanning segments follow: residues leucine 36–valine 56, leucine 95–glutamate 115, and threonine 131–isoleucine 151.

The protein belongs to the cytochrome b family. PetD subfamily. The 4 large subunits of the cytochrome b6-f complex are cytochrome b6, subunit IV (17 kDa polypeptide, petD), cytochrome f and the Rieske protein, while the 4 small subunits are petG, petL, petM and petN. The complex functions as a dimer.

The protein localises to the plastid. The protein resides in the chloroplast thylakoid membrane. Component of the cytochrome b6-f complex, which mediates electron transfer between photosystem II (PSII) and photosystem I (PSI), cyclic electron flow around PSI, and state transitions. This chain is Cytochrome b6-f complex subunit 4, found in Spirogyra maxima (Green alga).